We begin with the raw amino-acid sequence, 179 residues long: NAD(P)H-quinone oxidoreductase subunit I, chloroplastic (179 aa).

4Fe-4S ferredoxin-type domains are found at residues 55-84 (GRIHFEFDKCIACEVCVRVCPIDLPVVDWR) and 95-124 (LNYSIDFGICIFCGNCVEYCPTNCLSMTEE). [4Fe-4S] cluster is bound by residues cysteine 64, cysteine 67, cysteine 70, cysteine 74, cysteine 104, cysteine 107, cysteine 110, and cysteine 114.

This sequence belongs to the complex I 23 kDa subunit family. NDH is composed of at least 16 different subunits, 5 of which are encoded in the nucleus. Requires [4Fe-4S] cluster as cofactor.

The protein localises to the plastid. It is found in the chloroplast thylakoid membrane. It carries out the reaction a plastoquinone + NADH + (n+1) H(+)(in) = a plastoquinol + NAD(+) + n H(+)(out). The catalysed reaction is a plastoquinone + NADPH + (n+1) H(+)(in) = a plastoquinol + NADP(+) + n H(+)(out). NDH shuttles electrons from NAD(P)H:plastoquinone, via FMN and iron-sulfur (Fe-S) centers, to quinones in the photosynthetic chain and possibly in a chloroplast respiratory chain. The immediate electron acceptor for the enzyme in this species is believed to be plastoquinone. Couples the redox reaction to proton translocation, and thus conserves the redox energy in a proton gradient. The sequence is that of NAD(P)H-quinone oxidoreductase subunit I, chloroplastic from Nuphar advena (Common spatterdock).